A 184-amino-acid chain; its full sequence is Outer-membrane lipoprotein carrier protein (184 aa).

The N-terminal stretch at 1–19 is a signal peptide; that stretch reads MKAFLKILMVLIFVSVAYA.

This sequence belongs to the LolA family. As to quaternary structure, monomer.

It is found in the periplasm. Its function is as follows. Participates in the translocation of lipoproteins from the inner membrane to the outer membrane. Only forms a complex with a lipoprotein if the residue after the N-terminal Cys is not an aspartate (The Asp acts as a targeting signal to indicate that the lipoprotein should stay in the inner membrane). This is Outer-membrane lipoprotein carrier protein from Helicobacter pylori (strain P12).